The primary structure comprises 144 residues: Large ribosomal subunit protein uL11 (144 aa).

Belongs to the universal ribosomal protein uL11 family. In terms of assembly, part of the ribosomal stalk of the 50S ribosomal subunit. Interacts with L10 and the large rRNA to form the base of the stalk. L10 forms an elongated spine to which L12 dimers bind in a sequential fashion forming a multimeric L10(L12)X complex. Post-translationally, one or more lysine residues are methylated.

Forms part of the ribosomal stalk which helps the ribosome interact with GTP-bound translation factors. This chain is Large ribosomal subunit protein uL11, found in Neisseria meningitidis serogroup B (strain ATCC BAA-335 / MC58).